We begin with the raw amino-acid sequence, 82 residues long: MSTEKKQNLQDTFLNSVRKSKTPLTIFLVNGVKLQGVVSWFDNFCVLLRRDGQSQLVYKHAISTIMPAQPVQLYEPSADQDD.

The 61-residue stretch at 11 to 71 folds into the Sm domain; it reads DTFLNSVRKS…ISTIMPAQPV (61 aa).

The protein belongs to the Hfq family. Homohexamer.

Its function is as follows. RNA chaperone that binds small regulatory RNA (sRNAs) and mRNAs to facilitate mRNA translational regulation in response to envelope stress, environmental stress and changes in metabolite concentrations. Also binds with high specificity to tRNAs. In Caulobacter sp. (strain K31), this protein is RNA-binding protein Hfq.